The following is a 1994-amino-acid chain: Protein-methionine sulfoxide oxidase mical3a (1994 aa).

The monooxygenase domain stretch occupies residues Gly-2–Arg-498. Residues Cys-101, Cys-101–Asn-129, Glu-120, Arg-122, Arg-127, Asn-129, and Asp-402 contribute to the FAD site. In terms of domain architecture, Calponin-homology (CH) spans Ile-521–Lys-627. The tract at residues Ile-666 to Arg-708 is disordered. The span at Asp-674–Gly-684 shows a compositional bias: basic and acidic residues. In terms of domain architecture, LIM zinc-binding spans Asp-772–Gly-834. Disordered regions lie at residues Pro-843–Thr-900, Glu-917–Arg-1064, Ser-1176–Lys-1263, Leu-1281–Val-1476, Val-1493–Ala-1555, and Lys-1598–Arg-1747. Composition is skewed to acidic residues over residues Glu-917–Thr-926 and Ser-951–Glu-961. Positions Glu-975 to Ser-987 are enriched in basic and acidic residues. 2 stretches are compositionally biased toward acidic residues: residues Gly-1001–Ala-1037 and Pro-1046–Glu-1060. Positions Pro-1200–Cys-1215 are enriched in polar residues. Basic and acidic residues-rich tracts occupy residues Arg-1249–Lys-1263 and Glu-1287–Ile-1297. Composition is skewed to low complexity over residues Lys-1299–Glu-1314 and Ser-1358–Ser-1368. The span at Val-1369 to Thr-1389 shows a compositional bias: polar residues. Residues Pro-1437–Asn-1458 are compositionally biased toward pro residues. Residues Arg-1464–Val-1476 are compositionally biased toward basic and acidic residues. Residues Ala-1616 to Pro-1635 are compositionally biased toward basic and acidic residues. Residues Ser-1649 to Gly-1660 are compositionally biased toward low complexity. The span at Lys-1661–Lys-1679 shows a compositional bias: basic residues. Residues Ala-1680–Pro-1693 show a composition bias toward basic and acidic residues. The span at Cys-1718–Asp-1729 shows a compositional bias: low complexity. Basic and acidic residues predominate over residues Ser-1730–Leu-1746. 2 coiled-coil regions span residues Glu-1796 to Arg-1855 and Gln-1894 to Asp-1960. Residues Lys-1816–Ala-1982 enclose the bMERB domain.

It belongs to the Mical family. Requires FAD as cofactor.

The protein resides in the cytoplasm. The protein localises to the cytoskeleton. It is found in the nucleus. The catalysed reaction is L-methionyl-[F-actin] + NADPH + O2 + H(+) = L-methionyl-(R)-S-oxide-[F-actin] + NADP(+) + H2O. Its function is as follows. Monooxygenase that promotes depolymerization of F-actin by mediating oxidation of specific methionine residues on actin. Acts by modifying actin subunits through the addition of oxygen to form methionine-sulfoxide, leading to promote actin filament severing and prevent repolymerization. Involved in exocytic vesicles tethering and fusion: the monooxygenase activity is required for this process. This is Protein-methionine sulfoxide oxidase mical3a (mical3a) from Danio rerio (Zebrafish).